A 450-amino-acid polypeptide reads, in one-letter code: Hydrolase ffsE (450 aa).

The Nucleophile role is filled by serine 266.

This sequence belongs to the AB hydrolase superfamily. FUS2 hydrolase family. Homodimer.

Its pathway is mycotoxin biosynthesis. Hydrolase; part of the gene cluster that mediates the biosynthesis of the cytotoxic leucine-containing cytochalasans, including aspochalasin C, aspochalasin E, TMC-169, flavichalasine F, aspergillin PZ, aspochalasin M and flavichalasine G. The first step in the pathway is catalyzed by the hybrid PKS-NRPS ffsA that utilizes 8 units of malonyl-CoA to iteratively assemble the octaketide chain before addition of L-leucine by the C-terminal NRPS modules. Because ffsA lacks a designated enoylreductase (ER) domain, the required activity is provided the enoyl reductase fssC. The methyltransferase (MT) domain of ffsA catalyzes the alpha-methylation at C10 and C14 using S-adenosyl-L-methionine as the methyl-donating cosubstrate. Reduction by the hydrolyase ffsE, followed by dehydration and intra-molecular Diels-Alder cyclization by the Diels-Alderase ffsF then yield the required isoindolone-fused macrocycle. A number of oxidative steps catalyzed by the tailoring cytochrome P450 monooxygenase ffsD, the FAD-linked oxidoreductase ffsJ and the short-chain dehydrogenase/reductase ffsI, are further required to afford the final products. This chain is Hydrolase ffsE, found in Aspergillus flavipes.